The sequence spans 216 residues: Uracil phosphoribosyltransferase (216 aa).

30–34 (KNLVR) provides a ligand contact to GTP. 5-phospho-alpha-D-ribose 1-diphosphate-binding positions include R80, R105, and 140 to 148 (DPMIATAST). Residues I203 and 208 to 210 (GDA) each bind uracil. Position 209 (D209) interacts with 5-phospho-alpha-D-ribose 1-diphosphate.

The protein belongs to the UPRTase family. Mg(2+) serves as cofactor.

The catalysed reaction is UMP + diphosphate = 5-phospho-alpha-D-ribose 1-diphosphate + uracil. The protein operates within pyrimidine metabolism; UMP biosynthesis via salvage pathway; UMP from uracil: step 1/1. With respect to regulation, allosterically activated by GTP. Catalyzes the conversion of uracil and 5-phospho-alpha-D-ribose 1-diphosphate (PRPP) to UMP and diphosphate. The chain is Uracil phosphoribosyltransferase from Saccharolobus islandicus (strain M.16.4 / Kamchatka #3) (Sulfolobus islandicus).